Consider the following 344-residue polypeptide: Oxygen sensor histidine kinase NreB (344 aa).

4 residues coordinate [4Fe-4S] cluster: C58, C61, C73, and C76. Residues 152–344 form the Histidine kinase domain; that stretch reads RISRELHDSV…GTNVTLNIPI (193 aa). H158 carries the phosphohistidine; by autocatalysis modification.

It depends on [4Fe-4S] cluster as a cofactor. Autophosphorylated.

It localises to the cytoplasm. It carries out the reaction ATP + protein L-histidine = ADP + protein N-phospho-L-histidine.. Member of the two-component regulatory system NreB/NreC involved in the control of dissimilatory nitrate/nitrite reduction in response to oxygen. NreB functions as a direct oxygen sensor histidine kinase which is autophosphorylated, in the absence of oxygen, probably at the conserved histidine residue, and transfers its phosphate group probably to a conserved aspartate residue of NreC. NreB/NreC activates the expression of the nitrate (narGHJI) and nitrite (nir) reductase operons, as well as the putative nitrate transporter gene narT. The sequence is that of Oxygen sensor histidine kinase NreB (nreB) from Staphylococcus aureus (strain Mu3 / ATCC 700698).